A 93-amino-acid polypeptide reads, in one-letter code: UPF0473 protein YrzB (93 aa).

The protein belongs to the UPF0473 family.

The sequence is that of UPF0473 protein YrzB (yrzB) from Bacillus subtilis (strain 168).